The following is an 80-amino-acid chain: RNA-binding protein KhpA (80 aa).

The KH domain maps to 33–80 (GRTVEVHVHPDDLGKVIGRGGRTATALRKLVAGIGGRGIRVDVVDTDQ).

The protein belongs to the KhpA RNA-binding protein family.

The protein localises to the cytoplasm. Functionally, a probable RNA-binding protein. This chain is RNA-binding protein KhpA, found in Mycobacterium leprae (strain TN).